Here is a 124-residue protein sequence, read N- to C-terminus: Replication restart protein PriB (124 aa).

The region spanning 12 to 112 (IDNCLILSGS…VHAEHIEFID (101 aa)) is the SSB domain.

The protein belongs to the PriB family. In terms of assembly, homodimer. Interacts with PriA and DnaT. Component of the replication restart primosome. Primosome assembly occurs via a 'hand-off' mechanism. PriA binds to replication forks, subsequently PriB then DnaT bind; DnaT then displaces ssDNA to generate the helicase loading substrate.

Its function is as follows. Involved in the restart of stalled replication forks, which reloads the replicative helicase on sites other than the origin of replication; the PriA-PriB pathway is the major replication restart pathway. During primosome assembly it facilitates complex formation between PriA and DnaT on DNA; stabilizes PriA on DNA. Stimulates the DNA unwinding activity of PriA helicase. The sequence is that of Replication restart protein PriB from Actinobacillus pleuropneumoniae serotype 5b (strain L20).